A 378-amino-acid polypeptide reads, in one-letter code: Alanine racemase (378 aa).

Catalysis depends on Lys-35, which acts as the Proton acceptor; specific for D-alanine. Lys-35 carries the N6-(pyridoxal phosphate)lysine modification. Arg-133 is a substrate binding site. The Proton acceptor; specific for L-alanine role is filled by Tyr-266. Position 314 (Met-314) interacts with substrate.

It belongs to the alanine racemase family. Pyridoxal 5'-phosphate is required as a cofactor.

The enzyme catalyses L-alanine = D-alanine. It participates in amino-acid biosynthesis; D-alanine biosynthesis; D-alanine from L-alanine: step 1/1. In terms of biological role, catalyzes the interconversion of L-alanine and D-alanine. May also act on other amino acids. The chain is Alanine racemase (alr) from Beutenbergia cavernae (strain ATCC BAA-8 / DSM 12333 / CCUG 43141 / JCM 11478 / NBRC 16432 / NCIMB 13614 / HKI 0122).